The chain runs to 444 residues: Histidinol dehydrogenase (444 aa).

The NAD(+) site is built by Tyr-135, Gln-199, and Asn-227. The substrate site is built by Thr-250, Gln-272, and His-275. Residues Gln-272 and His-275 each coordinate Zn(2+). Active-site proton acceptor residues include Glu-341 and His-342. Substrate contacts are provided by His-342, Asp-375, Glu-429, and His-434. Asp-375 serves as a coordination point for Zn(2+). Residue His-434 coordinates Zn(2+).

This sequence belongs to the histidinol dehydrogenase family. Requires Zn(2+) as cofactor.

It catalyses the reaction L-histidinol + 2 NAD(+) + H2O = L-histidine + 2 NADH + 3 H(+). Its pathway is amino-acid biosynthesis; L-histidine biosynthesis; L-histidine from 5-phospho-alpha-D-ribose 1-diphosphate: step 9/9. Catalyzes the sequential NAD-dependent oxidations of L-histidinol to L-histidinaldehyde and then to L-histidine. The polypeptide is Histidinol dehydrogenase (hisD) (Mycobacterium bovis (strain ATCC BAA-935 / AF2122/97)).